The following is a 442-amino-acid chain: ATP-dependent protease ATPase subunit HslU (442 aa).

Residues isoleucine 18, 60-65 (GVGKTE), aspartate 255, glutamate 320, and arginine 392 each bind ATP.

This sequence belongs to the ClpX chaperone family. HslU subfamily. A double ring-shaped homohexamer of HslV is capped on each side by a ring-shaped HslU homohexamer. The assembly of the HslU/HslV complex is dependent on binding of ATP.

Its subcellular location is the cytoplasm. Its function is as follows. ATPase subunit of a proteasome-like degradation complex; this subunit has chaperone activity. The binding of ATP and its subsequent hydrolysis by HslU are essential for unfolding of protein substrates subsequently hydrolyzed by HslV. HslU recognizes the N-terminal part of its protein substrates and unfolds these before they are guided to HslV for hydrolysis. The sequence is that of ATP-dependent protease ATPase subunit HslU from Aeromonas salmonicida (strain A449).